The following is a 403-amino-acid chain: Keratin, type I cytoskeletal 19 (403 aa).

The head stretch occupies residues 1 to 82 (MTSYSYRQSS…TVTDGLLGGN (82 aa)). Arginine 7 carries the post-translational modification Omega-N-methylarginine. Serine 14 bears the Phosphoserine mark. Arginine 24 carries the asymmetric dimethylarginine; alternate modification. Residue arginine 24 is modified to Omega-N-methylarginine; alternate. Serine 27 bears the Phosphoserine mark. The residue at position 32 (arginine 32) is an Omega-N-methylarginine. Residues serine 35 and serine 40 each carry the phosphoserine modification. An omega-N-methylarginine mark is found at arginine 43 and arginine 51. 2 positions are modified to phosphoserine: serine 57 and serine 67. Residues 83–118 (EKITMQNLNDRLASYLDKVRALEQANGELEVKIRDW) are coil 1A. The region spanning 83 to 394 (EKITMQNLND…SLLEGQEAHY (312 aa)) is the IF rod domain. The linker 1 stretch occupies residues 119 to 136 (YQKQGPGPFRDYSQYFKT). The coil 1B stretch occupies residues 137–228 (IEDLRDKILG…KNHEEEISAL (92 aa)). The interval 229–251 (RSQVGGQVSVEVDSTPGIDLAKI) is linker 12. A necessary for interaction with PNN region spans residues 247–393 (DLAKILSEMR…RSLLEGQEAH (147 aa)). Positions 252–390 (LSEMRSQYEA…ATYRSLLEGQ (139 aa)) are coil 2. Phosphothreonine is present on threonine 326. The tract at residues 391-403 (EAHYNSLSIAKAL) is rod-like helical tail. Tyrosine 394 is modified (phosphotyrosine). Serine 398 carries the post-translational modification Phosphoserine.

This sequence belongs to the intermediate filament family. As to quaternary structure, heterotetramer of two type I and two type II keratins. Interacts with PNN. Interacts with the actin-binding domain of DMD. As to expression, expressed in brain, heart, skin and in costameres of myoplasm at the sarcolemmal membrane in skeletal and cardiac muscle fibers. Undifferentiated gonads and somatic cells of ovarian cords throughout the fetal ovary development.

Its function is as follows. Involved in the organization of myofibers. Together with KRT8, helps to link the contractile apparatus to dystrophin at the costameres of striated muscle. This chain is Keratin, type I cytoskeletal 19 (Krt19), found in Rattus norvegicus (Rat).